The primary structure comprises 369 residues: Dihydroorotate dehydrogenase (quinone) (369 aa).

FMN-binding positions include 66 to 70 (AGFDK) and T90. K70 contacts substrate. 115–119 (NRMGF) is a substrate binding site. FMN-binding residues include N143 and N176. A substrate-binding site is contributed by N176. Catalysis depends on S179, which acts as the Nucleophile. N181 contacts substrate. Residues K217 and T245 each contribute to the FMN site. Substrate is bound at residue 246–247 (NT). FMN contacts are provided by residues G271, G300, and 321 to 322 (YT).

This sequence belongs to the dihydroorotate dehydrogenase family. Type 2 subfamily. In terms of assembly, monomer. FMN serves as cofactor.

It localises to the cell membrane. It catalyses the reaction (S)-dihydroorotate + a quinone = orotate + a quinol. Its pathway is pyrimidine metabolism; UMP biosynthesis via de novo pathway; orotate from (S)-dihydroorotate (quinone route): step 1/1. In terms of biological role, catalyzes the conversion of dihydroorotate to orotate with quinone as electron acceptor. The chain is Dihydroorotate dehydrogenase (quinone) from Nocardia farcinica (strain IFM 10152).